A 379-amino-acid chain; its full sequence is Nematocin receptor 1 (379 aa).

Topologically, residues 19-48 (HNLYLFQMLELQENITDSQPMDPPSLEIMM) are extracellular. Asn32 is a glycosylation site (N-linked (GlcNAc...) asparagine). A helical transmembrane segment spans residues 49–69 (LHHLMIILVTLFGNTLLIYVI). The Cytoplasmic segment spans residues 70–95 (YKNNAVLRRKRVTPVQMLMLHMCAAD). Residues 96–116 (ILFALISVGPTMAITATVPFF) traverse the membrane as a helical segment. The Extracellular portion of the chain corresponds to 117 to 124 (YGPNLLCK). Cys123 and Cys196 are disulfide-bonded. Residues 125 to 145 (LTKFLQVIPMYASSFLLVAIS) form a helical membrane-spanning segment. At 146 to 168 (ADRYQAICRPLASMKSSIYNRPA) the chain is on the cytoplasmic side. Residues 169–189 (LYSGIAWTAAILFSTPQLYLF) traverse the membrane as a helical segment. The Extracellular portion of the chain corresponds to 190 to 207 (EKRNGDCSENYTTALQYQ). The N-linked (GlcNAc...) asparagine glycan is linked to Asn199. Residues 208–228 (LYVCLFNSVVWLLPSAIAGWL) traverse the membrane as a helical segment. At 229–289 (YLCVCKAVWK…DRRRVQTVKL (61 aa)) the chain is on the cytoplasmic side. The helical transmembrane segment at 290–310 (TLTIVAANFVLWAPFCITSVI) threads the bilayer. Topologically, residues 311–320 (DAVWPTAINS) are extracellular. N-linked (GlcNAc...) asparagine glycosylation occurs at Asn319. Residues 321 to 343 (TFATYIMFFGNLNSCMNPWLWFH) form a helical membrane-spanning segment. Residues 344–379 (FNRKQLKRACPCRKSSEPLIQSLVYVHVMTSEQSDF) lie on the Cytoplasmic side of the membrane.

Belongs to the G-protein coupled receptor 1 family. Vasopressin/oxytocin receptor subfamily. As to expression, detected in the left ASE gustatory neuron, the chemosensory neuron pairs ASH and ADF, and the PQR tail neuron. In males, detected in hook and tail sensory neurons involved in vulval sensing and hermaphrodite contact, and in spicule protractor muscles.

Its subcellular location is the cell membrane. In terms of biological role, receptor for nematocin. The activity of this receptor is mediated by G proteins which activate a phosphatidylinositol-calcium second messenger system. The activity of this receptor may be modulated by ntr-2, leading to reduced intracellular cAMP production. Plays a role in gustatory associative learning. Also plays a role in male mating behavior. The protein is Nematocin receptor 1 of Caenorhabditis elegans.